The sequence spans 545 residues: Chaperonin GroEL (545 aa).

ATP-binding positions include Thr29–Pro32, Lys50, Asp86–Thr90, Gly413, and Asp495.

It belongs to the chaperonin (HSP60) family. As to quaternary structure, forms a cylinder of 14 subunits composed of two heptameric rings stacked back-to-back. Interacts with the co-chaperonin GroES.

The protein resides in the cytoplasm. The catalysed reaction is ATP + H2O + a folded polypeptide = ADP + phosphate + an unfolded polypeptide.. Together with its co-chaperonin GroES, plays an essential role in assisting protein folding. The GroEL-GroES system forms a nano-cage that allows encapsulation of the non-native substrate proteins and provides a physical environment optimized to promote and accelerate protein folding. This Borrelia garinii subsp. bavariensis (strain ATCC BAA-2496 / DSM 23469 / PBi) (Borreliella bavariensis) protein is Chaperonin GroEL.